A 1414-amino-acid chain; its full sequence is DNA-directed RNA polymerase subunit beta' (1414 aa).

Zn(2+) contacts are provided by Cys-72, Cys-74, Cys-87, and Cys-90. Mg(2+) is bound by residues Asp-463, Asp-465, and Asp-467. Zn(2+) contacts are provided by Cys-811, Cys-885, Cys-892, and Cys-895.

It belongs to the RNA polymerase beta' chain family. As to quaternary structure, the RNAP catalytic core consists of 2 alpha, 1 beta, 1 beta' and 1 omega subunit. When a sigma factor is associated with the core the holoenzyme is formed, which can initiate transcription. The cofactor is Mg(2+). Zn(2+) serves as cofactor.

It carries out the reaction RNA(n) + a ribonucleoside 5'-triphosphate = RNA(n+1) + diphosphate. Functionally, DNA-dependent RNA polymerase catalyzes the transcription of DNA into RNA using the four ribonucleoside triphosphates as substrates. The protein is DNA-directed RNA polymerase subunit beta' of Roseobacter denitrificans (strain ATCC 33942 / OCh 114) (Erythrobacter sp. (strain OCh 114)).